The primary structure comprises 368 residues: Phosphotransferase IIC component GlvC (368 aa).

The Periplasmic portion of the chain corresponds to 1–11 (MLSQIQRFGGA). The region spanning 1–368 (MLSQIQRFGG…VGNMGGGLID (368 aa)) is the PTS EIIC type-1 domain. Residues 12–32 (MFTPVLLFPFAGIVVGLAILL) form a helical membrane-spanning segment. Topologically, residues 33–59 (QNPMFVGESLTDPNSLFAQIVHIIEEG) are cytoplasmic. Residues 60–80 (GWTVFRNMPLIFAVGLPIGLA) form a helical membrane-spanning segment. Topologically, residues 81 to 86 (KQAQGR) are periplasmic. The helical transmembrane segment at 87–107 (ACLAVMVSFLTWNYFINAMGM) threads the bilayer. The Cytoplasmic portion of the chain corresponds to 108-129 (TWGSYFGVDFTQDAVAGSGLTM). A helical membrane pass occupies residues 130 to 150 (MAGIKTLDTSIIGAIIISGIV). The Periplasmic segment spans residues 151 to 173 (TALHNRLFDKKLPVFLGIFQGTS). Residues 174 to 194 (YVVIIAFLVMIPCAWLTLLGW) traverse the membrane as a helical segment. Residues 195 to 198 (PKVQ) lie on the Cytoplasmic side of the membrane. Residues 199 to 221 (MGIESLQAFLRSAGALGVWVYTF) traverse the membrane as a helical segment. At 222-224 (LER) the chain is on the periplasmic side. Residues 225–245 (ILIPTGLHHFIYGQFIFGPAA) traverse the membrane as a helical segment. Over 246-276 (VEGGIQMYWAQHLQEFSLSAEPLKSLFPEGG) the chain is Cytoplasmic. Residues 277 to 297 (FALHGNSKIFGAVGISLAMYF) traverse the membrane as a helical segment. Residues 298-306 (TAAPENRVK) lie on the Periplasmic side of the membrane. The helical transmembrane segment at 307–327 (VAGLLIPATLTAMLVGITEPL) threads the bilayer. Position 328 (Glu-328) is a topological domain, cytoplasmic. Residues 329–349 (FTFLFISPLLFAVHAVLAASM) form a helical membrane-spanning segment. The Periplasmic portion of the chain corresponds to 350 to 368 (STVMYLFGVVGNMGGGLID).

It localises to the cell inner membrane. Functionally, the phosphoenolpyruvate-dependent sugar phosphotransferase system (PTS), a major carbohydrate active -transport system, catalyzes the phosphorylation of incoming sugar substrates concomitant with their translocation across the cell membrane. This operon may be cryptic in wild-type K12 strains. This Escherichia coli (strain K12) protein is Phosphotransferase IIC component GlvC.